A 266-amino-acid polypeptide reads, in one-letter code: 4-hydroxy-tetrahydrodipicolinate reductase (266 aa).

NAD(+)-binding positions include 8 to 13 (GAAGRM) and E33. R34 contributes to the NADP(+) binding site. Residues 97-99 (GST) and 121-124 (APNM) each bind NAD(+). Catalysis depends on H154, which acts as the Proton donor/acceptor. H155 contributes to the (S)-2,3,4,5-tetrahydrodipicolinate binding site. The active-site Proton donor is the K158. Residue 164 to 165 (GT) participates in (S)-2,3,4,5-tetrahydrodipicolinate binding.

This sequence belongs to the DapB family.

The protein localises to the cytoplasm. It catalyses the reaction (S)-2,3,4,5-tetrahydrodipicolinate + NAD(+) + H2O = (2S,4S)-4-hydroxy-2,3,4,5-tetrahydrodipicolinate + NADH + H(+). The catalysed reaction is (S)-2,3,4,5-tetrahydrodipicolinate + NADP(+) + H2O = (2S,4S)-4-hydroxy-2,3,4,5-tetrahydrodipicolinate + NADPH + H(+). It functions in the pathway amino-acid biosynthesis; L-lysine biosynthesis via DAP pathway; (S)-tetrahydrodipicolinate from L-aspartate: step 4/4. Functionally, catalyzes the conversion of 4-hydroxy-tetrahydrodipicolinate (HTPA) to tetrahydrodipicolinate. The chain is 4-hydroxy-tetrahydrodipicolinate reductase from Geobacter metallireducens (strain ATCC 53774 / DSM 7210 / GS-15).